The following is a 440-amino-acid chain: 26S proteasome regulatory subunit 4 (440 aa).

A compositionally biased stretch (gly residues) spans 1–13 (MGQSQSGGHGPGG). The tract at residues 1-49 (MGQSQSGGHGPGGGKKDDKDKKKKYEPPVPTRVGKKKKKTKGPDAASKL) is disordered. Glycine 2 is lipidated: N-myristoyl glycine. Serine 4 carries the post-translational modification Phosphoserine. A compositionally biased stretch (basic and acidic residues) spans 14–26 (GKKDDKDKKKKYE). Residue threonine 53 is modified to Phosphothreonine. The segment at 84–104 (QMKPLEEKQEEERSKVDDLRG) is disordered. The segment covering 86–103 (KPLEEKQEEERSKVDDLR) has biased composition (basic and acidic residues). ATP is bound at residue 226–233 (GPPGTGKT). A Glycyl lysine isopeptide (Lys-Gly) (interchain with G-Cter in ubiquitin) cross-link involves residue lysine 237. The residue at position 258 (lysine 258) is an N6-acetyllysine. Threonine 434 carries the phosphothreonine modification. Phosphotyrosine is present on tyrosine 439.

Belongs to the AAA ATPase family. Component of the 19S proteasome regulatory particle complex. The 26S proteasome consists of a 20S core particle (CP) and two 19S regulatory subunits (RP). The regulatory particle is made of a lid composed of 9 subunits, a base containing 6 ATPases including PSMC1 and few additional components. Interacts with SCA7. Interacts with NGLY1. Interacts with PAAF1.

Its subcellular location is the cytoplasm. The protein resides in the nucleus. It is found in the membrane. In terms of biological role, component of the 26S proteasome, a multiprotein complex involved in the ATP-dependent degradation of ubiquitinated proteins. This complex plays a key role in the maintenance of protein homeostasis by removing misfolded or damaged proteins, which could impair cellular functions, and by removing proteins whose functions are no longer required. Therefore, the proteasome participates in numerous cellular processes, including cell cycle progression, apoptosis, or DNA damage repair. PSMC1 belongs to the heterohexameric ring of AAA (ATPases associated with diverse cellular activities) proteins that unfolds ubiquitinated target proteins that are concurrently translocated into a proteolytic chamber and degraded into peptides. The polypeptide is 26S proteasome regulatory subunit 4 (PSMC1) (Homo sapiens (Human)).